A 297-amino-acid chain; its full sequence is Probable oxidoreductase (297 aa).

NAD(+) is bound at residue 9–33; sequence VVTGGASGLGAETVRALAAAGAEVT. Ser138 is a substrate binding site. The Proton acceptor role is filled by Tyr164.

This sequence belongs to the short-chain dehydrogenases/reductases (SDR) family.

The sequence is that of Probable oxidoreductase from Streptomyces lividans.